The following is an 83-amino-acid chain: Small ribosomal subunit protein bS18A (83 aa).

The protein belongs to the bacterial ribosomal protein bS18 family. Part of the 30S ribosomal subunit. Forms a tight heterodimer with protein bS6.

Functionally, binds as a heterodimer with protein bS6 to the central domain of the 16S rRNA, where it helps stabilize the platform of the 30S subunit. This Mycolicibacterium vanbaalenii (strain DSM 7251 / JCM 13017 / BCRC 16820 / KCTC 9966 / NRRL B-24157 / PYR-1) (Mycobacterium vanbaalenii) protein is Small ribosomal subunit protein bS18A.